The chain runs to 341 residues: Putative NADPH-dependent methylglyoxal reductase GRP2 (341 aa).

2 residues coordinate NADP(+): lysine 40 and tyrosine 171.

This sequence belongs to the NAD(P)-dependent epimerase/dehydratase family. Dihydroflavonol-4-reductase subfamily.

Its subcellular location is the cytoplasm. The catalysed reaction is (S)-lactaldehyde + NADP(+) = methylglyoxal + NADPH + H(+). In terms of biological role, catalyzes the irreversible reduction of the cytotoxic compound methylglyoxal (MG, 2-oxopropanal) to (S)-lactaldehyde. MG is synthesized via a bypath of glycolysis from dihydroxyacetone phosphate and is believed to play a role in cell cycle regulation and stress adaptation. The polypeptide is Putative NADPH-dependent methylglyoxal reductase GRP2 (GRP2) (Candida albicans (strain SC5314 / ATCC MYA-2876) (Yeast)).